Reading from the N-terminus, the 319-residue chain is Annexin A4 (319 aa).

At Thr7 the chain carries Phosphothreonine. Position 12 is a phosphoserine (Ser12). Annexin repeat units lie at residues 14-85, 86-157, 169-241, and 245-316; these read FNAT…GLMT, PTVL…SLSA, ALMK…AIVK, and SKPS…VLCG. Residues Lys213, Lys293, and Lys300 each carry the N6-acetyllysine modification.

This sequence belongs to the annexin family.

It is found in the zymogen granule membrane. Calcium/phospholipid-binding protein which promotes membrane fusion and is involved in exocytosis. The sequence is that of Annexin A4 (Anxa4) from Mus musculus (Mouse).